Consider the following 208-residue polypeptide: Small ribosomal subunit protein uS4 (208 aa).

The S4 RNA-binding domain maps to 98–158 (RRLDNVVYRL…EKSRKIACIN (61 aa)).

The protein belongs to the universal ribosomal protein uS4 family. Part of the 30S ribosomal subunit. Contacts protein S5. The interaction surface between S4 and S5 is involved in control of translational fidelity.

One of the primary rRNA binding proteins, it binds directly to 16S rRNA where it nucleates assembly of the body of the 30S subunit. Its function is as follows. With S5 and S12 plays an important role in translational accuracy. The polypeptide is Small ribosomal subunit protein uS4 (Geobacter metallireducens (strain ATCC 53774 / DSM 7210 / GS-15)).